The sequence spans 101 residues: Trp operon repressor homolog (101 aa).

A DNA-binding region spans residues glutamine 59–threonine 82.

The protein belongs to the TrpR family. In terms of assembly, homodimer.

The protein resides in the cytoplasm. In terms of biological role, this protein is an aporepressor. When complexed with L-tryptophan it binds the operator region of the trp operon and prevents the initiation of transcription. The polypeptide is Trp operon repressor homolog (Haemophilus influenzae (strain 86-028NP)).